Consider the following 248-residue polypeptide: Ribosomal RNA small subunit methyltransferase A (248 aa).

6 residues coordinate S-adenosyl-L-methionine: His-11, Leu-13, Gly-38, Glu-60, Asp-83, and Asn-101.

The protein belongs to the class I-like SAM-binding methyltransferase superfamily. rRNA adenine N(6)-methyltransferase family. RsmA subfamily.

It is found in the cytoplasm. The catalysed reaction is adenosine(1518)/adenosine(1519) in 16S rRNA + 4 S-adenosyl-L-methionine = N(6)-dimethyladenosine(1518)/N(6)-dimethyladenosine(1519) in 16S rRNA + 4 S-adenosyl-L-homocysteine + 4 H(+). Its function is as follows. Specifically dimethylates two adjacent adenosines (A1518 and A1519) in the loop of a conserved hairpin near the 3'-end of 16S rRNA in the 30S particle. May play a critical role in biogenesis of 30S subunits. The sequence is that of Ribosomal RNA small subunit methyltransferase A from Aquifex aeolicus (strain VF5).